The chain runs to 293 residues: ATP synthase gamma chain (293 aa).

The protein belongs to the ATPase gamma chain family. In terms of assembly, F-type ATPases have 2 components, CF(1) - the catalytic core - and CF(0) - the membrane proton channel. CF(1) has five subunits: alpha(3), beta(3), gamma(1), delta(1), epsilon(1). CF(0) has three main subunits: a, b and c.

Its subcellular location is the cell membrane. Produces ATP from ADP in the presence of a proton gradient across the membrane. The gamma chain is believed to be important in regulating ATPase activity and the flow of protons through the CF(0) complex. In Methylacidiphilum infernorum (isolate V4) (Methylokorus infernorum (strain V4)), this protein is ATP synthase gamma chain.